Reading from the N-terminus, the 209-residue chain is Ribosome maturation factor RimP (209 aa).

The protein belongs to the RimP family.

Its subcellular location is the cytoplasm. Its function is as follows. Required for maturation of 30S ribosomal subunits. The polypeptide is Ribosome maturation factor RimP (Bartonella bacilliformis (strain ATCC 35685 / KC583 / Herrer 020/F12,63)).